We begin with the raw amino-acid sequence, 148 residues long: Deoxyuridine 5'-triphosphate nucleotidohydrolase (148 aa).

Substrate is bound by residues 68 to 70, asparagine 81, and 85 to 87; these read RSG and TID.

Belongs to the dUTPase family. Requires Mg(2+) as cofactor.

The catalysed reaction is dUTP + H2O = dUMP + diphosphate + H(+). Its pathway is pyrimidine metabolism; dUMP biosynthesis; dUMP from dCTP (dUTP route): step 2/2. Its function is as follows. This enzyme is involved in nucleotide metabolism: it produces dUMP, the immediate precursor of thymidine nucleotides and it decreases the intracellular concentration of dUTP so that uracil cannot be incorporated into DNA. The sequence is that of Deoxyuridine 5'-triphosphate nucleotidohydrolase from Geobacter metallireducens (strain ATCC 53774 / DSM 7210 / GS-15).